Consider the following 159-residue polypeptide: Probable inactive acireductone dioxygenase 2 (159 aa).

This sequence belongs to the acireductone dioxygenase (ARD) family.

The protein resides in the cytoplasm. It localises to the nucleus. Functionally, probable inactive acireductone dioxygenase. The protein is Probable inactive acireductone dioxygenase 2 of Caenorhabditis briggsae.